The following is a 299-amino-acid chain: Acetylglutamate kinase (299 aa).

Residues 68–69 (GG), Arg90, and Asn194 each bind substrate.

This sequence belongs to the acetylglutamate kinase family. ArgB subfamily.

Its subcellular location is the cytoplasm. The catalysed reaction is N-acetyl-L-glutamate + ATP = N-acetyl-L-glutamyl 5-phosphate + ADP. Its pathway is amino-acid biosynthesis; L-arginine biosynthesis; N(2)-acetyl-L-ornithine from L-glutamate: step 2/4. Catalyzes the ATP-dependent phosphorylation of N-acetyl-L-glutamate. In Psychrobacter cryohalolentis (strain ATCC BAA-1226 / DSM 17306 / VKM B-2378 / K5), this protein is Acetylglutamate kinase.